Here is a 325-residue protein sequence, read N- to C-terminus: Acetyl-coenzyme A carboxylase carboxyl transferase subunit alpha (325 aa).

Residues 44 to 298 enclose the CoA carboxyltransferase C-terminal domain; that stretch reads QLEARADQLR…KAAIQDNLQA (255 aa).

Belongs to the AccA family. Acetyl-CoA carboxylase is a heterohexamer composed of biotin carboxyl carrier protein (AccB), biotin carboxylase (AccC) and two subunits each of ACCase subunit alpha (AccA) and ACCase subunit beta (AccD).

Its subcellular location is the cytoplasm. It carries out the reaction N(6)-carboxybiotinyl-L-lysyl-[protein] + acetyl-CoA = N(6)-biotinyl-L-lysyl-[protein] + malonyl-CoA. It functions in the pathway lipid metabolism; malonyl-CoA biosynthesis; malonyl-CoA from acetyl-CoA: step 1/1. Component of the acetyl coenzyme A carboxylase (ACC) complex. First, biotin carboxylase catalyzes the carboxylation of biotin on its carrier protein (BCCP) and then the CO(2) group is transferred by the carboxyltransferase to acetyl-CoA to form malonyl-CoA. The chain is Acetyl-coenzyme A carboxylase carboxyl transferase subunit alpha from Picosynechococcus sp. (strain ATCC 27264 / PCC 7002 / PR-6) (Agmenellum quadruplicatum).